The chain runs to 297 residues: uncharacterized protein (297 aa).

In terms of domain architecture, HTH lysR-type spans 1 to 60 (MNIELRHLRYFVAVAEELHFGRAAARLNISQPPLSQQIQALEQQIGARLLARTNRSVLLT). The segment at residues 20–40 (FGRAAARLNISQPPLSQQIQA) is a DNA-binding region (H-T-H motif).

The protein belongs to the LysR transcriptional regulatory family.

This is an uncharacterized protein from Escherichia coli (strain K12).